We begin with the raw amino-acid sequence, 121 residues long: Large ribosomal subunit protein bL12 (121 aa).

This sequence belongs to the bacterial ribosomal protein bL12 family. In terms of assembly, homodimer. Part of the ribosomal stalk of the 50S ribosomal subunit. Forms a multimeric L10(L12)X complex, where L10 forms an elongated spine to which 2 to 4 L12 dimers bind in a sequential fashion. Binds GTP-bound translation factors.

In terms of biological role, forms part of the ribosomal stalk which helps the ribosome interact with GTP-bound translation factors. Is thus essential for accurate translation. The chain is Large ribosomal subunit protein bL12 from Enterobacter sp. (strain 638).